Here is a 213-residue protein sequence, read N- to C-terminus: Thymidylate kinase (213 aa).

An ATP-binding site is contributed by 10-17; the sequence is GLEGAGKT.

Belongs to the thymidylate kinase family.

It catalyses the reaction dTMP + ATP = dTDP + ADP. In terms of biological role, phosphorylation of dTMP to form dTDP in both de novo and salvage pathways of dTTP synthesis. The protein is Thymidylate kinase of Escherichia coli O81 (strain ED1a).